We begin with the raw amino-acid sequence, 435 residues long: Polyadenylate-binding protein RBP47B (435 aa).

The span at 1 to 15 (MQTTNGSDSTLATSG) shows a compositional bias: polar residues. Disordered regions lie at residues 1-41 (MQTT…QQWM) and 85-104 (YGSY…RGSG). Low complexity predominate over residues 29–41 (QWQQQQQQQQQWM). 3 RRM domains span residues 108–188 (KTLW…WASF), 202–281 (LSVF…IATP), and 321–393 (ATIF…WGRS). The interval 392–412 (RSPNKQWRGDSGQQWNGGYSR) is disordered.

It belongs to the polyadenylate-binding RBP47 family. Interacts with the poly(A) tail of mRNA in nucleus. As to expression, expressed at low levels in leaves, stems, flowers, and seedlings.

It localises to the nucleus. It is found in the cytoplasmic granule. Its function is as follows. Heterogeneous nuclear ribonucleoprotein (hnRNP)-protein binding the poly(A) tail of mRNA and probably involved in some steps of pre-mRNA maturation. In Arabidopsis thaliana (Mouse-ear cress), this protein is Polyadenylate-binding protein RBP47B (RBP47B).